A 142-amino-acid polypeptide reads, in one-letter code: Peptide methionine sulfoxide reductase MsrB (142 aa).

The MsrB domain occupies 3 to 126 (KEELKKKLSP…NSAALRFIPF (124 aa)). The active-site Nucleophile is the Cys115.

The protein belongs to the MsrB Met sulfoxide reductase family.

The catalysed reaction is L-methionyl-[protein] + [thioredoxin]-disulfide + H2O = L-methionyl-(R)-S-oxide-[protein] + [thioredoxin]-dithiol. This Lactococcus lactis subsp. cremoris (strain SK11) protein is Peptide methionine sulfoxide reductase MsrB.